The chain runs to 501 residues: 2,3-bisphosphoglycerate-independent phosphoglycerate mutase (501 aa).

2 residues coordinate Mn(2+): D12 and S62. S62 (phosphoserine intermediate) is an active-site residue. Residues H121, 150–151 (RD), R182, R188, 253–256 (RSDR), and K322 each bind substrate. Positions 389, 393, 430, 431, and 449 each coordinate Mn(2+).

Belongs to the BPG-independent phosphoglycerate mutase family. In terms of assembly, monomer. Mn(2+) is required as a cofactor.

It catalyses the reaction (2R)-2-phosphoglycerate = (2R)-3-phosphoglycerate. It participates in carbohydrate degradation; glycolysis; pyruvate from D-glyceraldehyde 3-phosphate: step 3/5. Its function is as follows. Catalyzes the interconversion of 2-phosphoglycerate and 3-phosphoglycerate. This is 2,3-bisphosphoglycerate-independent phosphoglycerate mutase from Ehrlichia ruminantium (strain Gardel).